Consider the following 357-residue polypeptide: S-adenosylmethionine:tRNA ribosyltransferase-isomerase (357 aa).

It belongs to the QueA family. In terms of assembly, monomer.

The protein localises to the cytoplasm. It catalyses the reaction 7-aminomethyl-7-carbaguanosine(34) in tRNA + S-adenosyl-L-methionine = epoxyqueuosine(34) in tRNA + adenine + L-methionine + 2 H(+). It functions in the pathway tRNA modification; tRNA-queuosine biosynthesis. Functionally, transfers and isomerizes the ribose moiety from AdoMet to the 7-aminomethyl group of 7-deazaguanine (preQ1-tRNA) to give epoxyqueuosine (oQ-tRNA). The sequence is that of S-adenosylmethionine:tRNA ribosyltransferase-isomerase from Hamiltonella defensa subsp. Acyrthosiphon pisum (strain 5AT).